The sequence spans 283 residues: 4-hydroxy-3-methylbut-2-enyl diphosphate reductase (283 aa).

A [4Fe-4S] cluster-binding site is contributed by cysteine 12. Histidine 40 and histidine 72 together coordinate (2E)-4-hydroxy-3-methylbut-2-enyl diphosphate. Dimethylallyl diphosphate is bound by residues histidine 40 and histidine 72. Isopentenyl diphosphate is bound by residues histidine 40 and histidine 72. Cysteine 94 contributes to the [4Fe-4S] cluster binding site. Histidine 122 contacts (2E)-4-hydroxy-3-methylbut-2-enyl diphosphate. Histidine 122 provides a ligand contact to dimethylallyl diphosphate. Isopentenyl diphosphate is bound at residue histidine 122. The Proton donor role is filled by glutamate 124. Residue threonine 160 coordinates (2E)-4-hydroxy-3-methylbut-2-enyl diphosphate. Cysteine 188 serves as a coordination point for [4Fe-4S] cluster. (2E)-4-hydroxy-3-methylbut-2-enyl diphosphate-binding residues include serine 216, asparagine 218, and serine 259. Serine 216, asparagine 218, and serine 259 together coordinate dimethylallyl diphosphate. 3 residues coordinate isopentenyl diphosphate: serine 216, asparagine 218, and serine 259.

The protein belongs to the IspH family. [4Fe-4S] cluster is required as a cofactor.

The catalysed reaction is isopentenyl diphosphate + 2 oxidized [2Fe-2S]-[ferredoxin] + H2O = (2E)-4-hydroxy-3-methylbut-2-enyl diphosphate + 2 reduced [2Fe-2S]-[ferredoxin] + 2 H(+). It catalyses the reaction dimethylallyl diphosphate + 2 oxidized [2Fe-2S]-[ferredoxin] + H2O = (2E)-4-hydroxy-3-methylbut-2-enyl diphosphate + 2 reduced [2Fe-2S]-[ferredoxin] + 2 H(+). It functions in the pathway isoprenoid biosynthesis; dimethylallyl diphosphate biosynthesis; dimethylallyl diphosphate from (2E)-4-hydroxy-3-methylbutenyl diphosphate: step 1/1. It participates in isoprenoid biosynthesis; isopentenyl diphosphate biosynthesis via DXP pathway; isopentenyl diphosphate from 1-deoxy-D-xylulose 5-phosphate: step 6/6. Catalyzes the conversion of 1-hydroxy-2-methyl-2-(E)-butenyl 4-diphosphate (HMBPP) into a mixture of isopentenyl diphosphate (IPP) and dimethylallyl diphosphate (DMAPP). Acts in the terminal step of the DOXP/MEP pathway for isoprenoid precursor biosynthesis. The protein is 4-hydroxy-3-methylbut-2-enyl diphosphate reductase of Dictyoglomus turgidum (strain DSM 6724 / Z-1310).